A 340-amino-acid polypeptide reads, in one-letter code: Glycerol-3-phosphate dehydrogenase [NAD(P)+] (340 aa).

S14, Y15, H35, and K109 together coordinate NADPH. Residues K109, G138, and T140 each coordinate sn-glycerol 3-phosphate. Residue A142 participates in NADPH binding. Sn-glycerol 3-phosphate-binding residues include K194, D247, S257, R258, and N259. The active-site Proton acceptor is K194. R258 contributes to the NADPH binding site. Residues V282 and E284 each coordinate NADPH.

The protein belongs to the NAD-dependent glycerol-3-phosphate dehydrogenase family.

The protein resides in the cytoplasm. The catalysed reaction is sn-glycerol 3-phosphate + NAD(+) = dihydroxyacetone phosphate + NADH + H(+). It catalyses the reaction sn-glycerol 3-phosphate + NADP(+) = dihydroxyacetone phosphate + NADPH + H(+). It participates in membrane lipid metabolism; glycerophospholipid metabolism. Its function is as follows. Catalyzes the reduction of the glycolytic intermediate dihydroxyacetone phosphate (DHAP) to sn-glycerol 3-phosphate (G3P), the key precursor for phospholipid synthesis. The sequence is that of Glycerol-3-phosphate dehydrogenase [NAD(P)+] from Photorhabdus laumondii subsp. laumondii (strain DSM 15139 / CIP 105565 / TT01) (Photorhabdus luminescens subsp. laumondii).